The following is a 206-amino-acid chain: MAASTASHRPIKGILKNKTSAASPPVVPSAEQPRPIVEEELSKKSQKWDEMNILATYHPADKDYGLMKIDEPNTPYHNMIGDDEDAYSDSEGNEVMTPDILAKKLAAAEGSEPKYRTREQESSGEEDNDLSPEEREKKRQFEMKRKLHYNEGLNIKLARQLISKDLHDDDEDEEMAETADGDSMNVEESSQGSTTSDHLQHKSQSS.

The segment at 1–36 is disordered; sequence MAASTASHRPIKGILKNKTSAASPPVVPSAEQPRPI. Ala2 is subject to N-acetylalanine. A required for binding PPP1CC region spans residues 12–17; that stretch reads KGILKN. Residues 44–56 form a required for binding the 'RVXF' binding groove of PPP1CC region; sequence KSQKWDEMNILAT. Position 45 is a phosphoserine; by ATM (Ser45). Phosphothreonine is present on Thr74. Positions 75-143 are disordered; the sequence is PYHNMIGDDE…EREKKRQFEM (69 aa). A compositionally biased stretch (acidic residues) spans 81 to 92; the sequence is GDDEDAYSDSEG. Phosphoserine is present on residues Ser88 and Ser90. Phosphothreonine is present on residues Thr97 and Thr117. Residues 111–121 show a composition bias toward basic and acidic residues; it reads SEPKYRTREQE. Phosphoserine occurs at positions 122, 123, and 131. Over residues 122–131 the composition is skewed to acidic residues; sequence SSGEEDNDLS. Positions 132 to 143 are enriched in basic and acidic residues; sequence PEEREKKRQFEM. Positions 148–151 are required for binding PPP1CC catalytic center, displacing metal ions and inhibition of PPP1CC catalytic activity; that stretch reads HYNE. A disordered region spans residues 164-206; the sequence is KDLHDDDEDEEMAETADGDSMNVEESSQGSTTSDHLQHKSQSS. The segment covering 168–180 has biased composition (acidic residues); that stretch reads DDDEDEEMAETAD. Residues 186-206 show a composition bias toward polar residues; the sequence is VEESSQGSTTSDHLQHKSQSS.

This sequence belongs to the protein phosphatase inhibitor 2 family. As to quaternary structure, heterodimer with PP1. In terms of processing, phosphorylation on Ser-45 by ATM activates PP1 by dissociating the PP1-PPP1R2 complex. Phosphorylation on Thr-74 by GSK3 activates PP1 by dissociating the PP1-PPP1R2 complex.

Its function is as follows. Inhibitor of protein-phosphatase 1. This is Protein phosphatase inhibitor 2 (Ppp1r2) from Mus musculus (Mouse).